A 381-amino-acid chain; its full sequence is GDP-mannose-dependent alpha-(1-6)-phosphatidylinositol dimannoside mannosyltransferase (381 aa).

Substrate-binding positions include G16, R207, 211–212 (EK), 283–287 (ETFGL), and E291.

This sequence belongs to the glycosyltransferase group 1 family. Glycosyltransferase 4 subfamily.

Its pathway is phospholipid metabolism; phosphatidylinositol metabolism. Its function is as follows. Catalyzes the addition of a mannose residue from GDP-D-mannose to the position 6 of the alpha-1,6-linked mannose residue of the triacyl phosphatidylinositol dimannoside (Ac3PIM2) to generate triacyl phosphatidylinositol trimannoside (Ac3PIM3). This chain is GDP-mannose-dependent alpha-(1-6)-phosphatidylinositol dimannoside mannosyltransferase (pimC), found in Mycobacterium tuberculosis (strain ATCC 25177 / H37Ra).